Consider the following 332-residue polypeptide: Biotin synthase (332 aa).

The region spanning 53-282 is the Radical SAM core domain; the sequence is HFGKKVKLNM…TKEIRISGGR (230 aa). [4Fe-4S] cluster-binding residues include Cys71, Cys75, and Cys78. [2Fe-2S] cluster contacts are provided by Cys115, Cys147, Cys207, and Arg277.

It belongs to the radical SAM superfamily. Biotin synthase family. In terms of assembly, homodimer. [4Fe-4S] cluster serves as cofactor. [2Fe-2S] cluster is required as a cofactor.

It carries out the reaction (4R,5S)-dethiobiotin + (sulfur carrier)-SH + 2 reduced [2Fe-2S]-[ferredoxin] + 2 S-adenosyl-L-methionine = (sulfur carrier)-H + biotin + 2 5'-deoxyadenosine + 2 L-methionine + 2 oxidized [2Fe-2S]-[ferredoxin]. Its pathway is cofactor biosynthesis; biotin biosynthesis; biotin from 7,8-diaminononanoate: step 2/2. In terms of biological role, catalyzes the conversion of dethiobiotin (DTB) to biotin by the insertion of a sulfur atom into dethiobiotin via a radical-based mechanism. In Bacillus cereus (strain ATCC 14579 / DSM 31 / CCUG 7414 / JCM 2152 / NBRC 15305 / NCIMB 9373 / NCTC 2599 / NRRL B-3711), this protein is Biotin synthase.